The chain runs to 200 residues: Imidazoleglycerol-phosphate dehydratase (200 aa).

This sequence belongs to the imidazoleglycerol-phosphate dehydratase family.

Its subcellular location is the cytoplasm. It carries out the reaction D-erythro-1-(imidazol-4-yl)glycerol 3-phosphate = 3-(imidazol-4-yl)-2-oxopropyl phosphate + H2O. Its pathway is amino-acid biosynthesis; L-histidine biosynthesis; L-histidine from 5-phospho-alpha-D-ribose 1-diphosphate: step 6/9. This chain is Imidazoleglycerol-phosphate dehydratase, found in Prosthecochloris aestuarii (strain DSM 271 / SK 413).